A 670-amino-acid polypeptide reads, in one-letter code: UvrABC system protein B (670 aa).

A Helicase ATP-binding domain is found at 51-433 (DGLKKGEPFQ…SSRVVEQIIR (383 aa)). 64-71 (GVTGSGKT) serves as a coordination point for ATP. The Beta-hairpin motif lies at 117–140 (YYDYYQPESYLPAKDQYIEKDAMI). A Helicase C-terminal domain is found at 453–612 (DVMQEIRKIV…IVPTTIRKPI (160 aa)). The 36-residue stretch at 631–666 (PNVIIELDAEMREAADRLDFERAIQVRELIKKLEKE) folds into the UVR domain.

It belongs to the UvrB family. As to quaternary structure, forms a heterotetramer with UvrA during the search for lesions. Interacts with UvrC in an incision complex.

It localises to the cytoplasm. Functionally, the UvrABC repair system catalyzes the recognition and processing of DNA lesions. A damage recognition complex composed of 2 UvrA and 2 UvrB subunits scans DNA for abnormalities. Upon binding of the UvrA(2)B(2) complex to a putative damaged site, the DNA wraps around one UvrB monomer. DNA wrap is dependent on ATP binding by UvrB and probably causes local melting of the DNA helix, facilitating insertion of UvrB beta-hairpin between the DNA strands. Then UvrB probes one DNA strand for the presence of a lesion. If a lesion is found the UvrA subunits dissociate and the UvrB-DNA preincision complex is formed. This complex is subsequently bound by UvrC and the second UvrB is released. If no lesion is found, the DNA wraps around the other UvrB subunit that will check the other stand for damage. The polypeptide is UvrABC system protein B (Methanosarcina mazei (strain ATCC BAA-159 / DSM 3647 / Goe1 / Go1 / JCM 11833 / OCM 88) (Methanosarcina frisia)).